A 429-amino-acid chain; its full sequence is Adenylosuccinate synthetase (429 aa).

Residues 13–19 and 41–43 contribute to the GTP site; these read GDEGKGK and GHT. The active-site Proton acceptor is Asp14. The Mg(2+) site is built by Asp14 and Gly41. Residues 14-17, 39-42, Thr130, Arg144, Gln225, Thr240, and Arg304 contribute to the IMP site; these read DEGK and NAGH. His42 acts as the Proton donor in catalysis. 300–306 is a binding site for substrate; sequence ATTGRAR. GTP contacts are provided by residues Arg306, 332–334, and 413–415; these read KLD and STG.

This sequence belongs to the adenylosuccinate synthetase family. Homodimer. Mg(2+) serves as cofactor.

It is found in the cytoplasm. The enzyme catalyses IMP + L-aspartate + GTP = N(6)-(1,2-dicarboxyethyl)-AMP + GDP + phosphate + 2 H(+). It functions in the pathway purine metabolism; AMP biosynthesis via de novo pathway; AMP from IMP: step 1/2. Its function is as follows. Plays an important role in the de novo pathway of purine nucleotide biosynthesis. Catalyzes the first committed step in the biosynthesis of AMP from IMP. The chain is Adenylosuccinate synthetase from Pseudomonas fluorescens (strain SBW25).